The primary structure comprises 82 residues: RNA-binding protein GTNG_0100 (82 aa).

It belongs to the eukaryotic ribosomal protein eL8 family.

This chain is RNA-binding protein GTNG_0100, found in Geobacillus thermodenitrificans (strain NG80-2).